Reading from the N-terminus, the 491-residue chain is Putative ABC transporter ATP-binding protein TDE_0906 (491 aa).

2 ABC transporter domains span residues 2-241 (INLN…KQGL) and 267-491 (LTLH…KERL). ATP contacts are provided by residues 36–43 (GKSGCGKT) and 300–307 (GKNGCGKT).

The protein belongs to the ABC transporter superfamily.

The protein resides in the cell inner membrane. Probably part of an ABC transporter complex. Responsible for energy coupling to the transport system. The protein is Putative ABC transporter ATP-binding protein TDE_0906 of Treponema denticola (strain ATCC 35405 / DSM 14222 / CIP 103919 / JCM 8153 / KCTC 15104).